Consider the following 251-residue polypeptide: Capsid protein (251 aa).

Residues 3–20 (KRDAPWRSMAGTSKVSRN) carry the Bipartite nuclear localization signal motif. A Nuclear localization signal motif is present at residues 35–49 (KAAAWVNRPMYRKPR). The segment at 63–80 (CEGPCKVQSYEQRHDISH) is a zinc-finger region. Positions 96–117 (ITHRVGKRFCVKSVYILGKIWM) match the Nuclear export signal motif. The short motif at 195-242 (KRFWKVNNYVVYNHQEAGKYENHTENALLLYMACTHASNPVYATLKIR) is the Bipartite nuclear localization signal element.

It belongs to the geminiviridae capsid protein family. As to quaternary structure, homomultimer. Binds to single-stranded and double-stranded viral DNA. Interacts (via nuclear localization signals) with host importin alpha-1a.

The protein localises to the virion. It localises to the host nucleus. Encapsidates the viral DNA into characteristic twinned ('geminate') particles. Binds the genomic viral ssDNA and shuttles it into and out of the cell nucleus. The CP of bipartite geminiviruses is not required for cell-to-cell or systemic movement. This Cabbage leaf curl virus (isolate Jamaica) (CaLCuV) protein is Capsid protein.